Here is a 441-residue protein sequence, read N- to C-terminus: tRNA (guanine(37)-N(1))-methyltransferase (441 aa).

The N-terminal 9 residues, 1-9 (MFAPPAARA), are a transit peptide targeting the mitochondrion. S-adenosyl-L-methionine contacts are provided by residues R221, 248–249 (DL), 276–277 (DG), and N331.

The protein belongs to the class I-like SAM-binding methyltransferase superfamily. TRM5/TYW2 family. As to quaternary structure, monomer.

The protein localises to the mitochondrion matrix. Its subcellular location is the nucleus. It localises to the cytoplasm. It carries out the reaction guanosine(37) in tRNA + S-adenosyl-L-methionine = N(1)-methylguanosine(37) in tRNA + S-adenosyl-L-homocysteine + H(+). Its function is as follows. Specifically methylates the N1 position of guanosine-37 in various cytoplasmic and mitochondrial tRNAs. Methylation is not dependent on the nature of the nucleoside 5' of the target nucleoside. This is the first step in the biosynthesis of wybutosine (yW), a modified base adjacent to the anticodon of tRNAs and required for accurate decoding. In Phaeosphaeria nodorum (strain SN15 / ATCC MYA-4574 / FGSC 10173) (Glume blotch fungus), this protein is tRNA (guanine(37)-N(1))-methyltransferase.